A 530-amino-acid polypeptide reads, in one-letter code: Na(+)/H(+) antiporter NhaB (530 aa).

10 helical membrane-spanning segments follow: residues 13–33 (FLGQ…LINP), 67–87 (PGGL…ETVL), 90–110 (VVGN…IYFL), 138–158 (AAAL…VIAV), 205–225 (LLMH…VGEP), 245–265 (MAPI…FLEF), 302–333 (LVIQ…VIIL), 350–370 (FEEA…VAVI), 449–469 (VATP…LAPL), and 477–497 (MVIM…VMTA).

Belongs to the NhaB Na(+)/H(+) (TC 2.A.34) antiporter family.

The protein localises to the cell inner membrane. It carries out the reaction 2 Na(+)(in) + 3 H(+)(out) = 2 Na(+)(out) + 3 H(+)(in). Na(+)/H(+) antiporter that extrudes sodium in exchange for external protons. This Alcanivorax borkumensis (strain ATCC 700651 / DSM 11573 / NCIMB 13689 / SK2) protein is Na(+)/H(+) antiporter NhaB.